A 387-amino-acid polypeptide reads, in one-letter code: Erythronate-4-phosphate dehydrogenase (387 aa).

Residues Ser45 and Thr67 each coordinate substrate. Position 147 (Asp147) interacts with NAD(+). Arg208 is an active-site residue. NAD(+) is bound at residue Asp232. Glu237 is an active-site residue. Residue His254 is the Proton donor of the active site. Position 257 (Gly257) interacts with NAD(+). Residue Tyr258 participates in substrate binding.

The protein belongs to the D-isomer specific 2-hydroxyacid dehydrogenase family. PdxB subfamily. As to quaternary structure, homodimer.

Its subcellular location is the cytoplasm. The catalysed reaction is 4-phospho-D-erythronate + NAD(+) = (R)-3-hydroxy-2-oxo-4-phosphooxybutanoate + NADH + H(+). It functions in the pathway cofactor biosynthesis; pyridoxine 5'-phosphate biosynthesis; pyridoxine 5'-phosphate from D-erythrose 4-phosphate: step 2/5. Catalyzes the oxidation of erythronate-4-phosphate to 3-hydroxy-2-oxo-4-phosphonooxybutanoate. The polypeptide is Erythronate-4-phosphate dehydrogenase (Shewanella violacea (strain JCM 10179 / CIP 106290 / LMG 19151 / DSS12)).